Consider the following 460-residue polypeptide: UDP-N-acetylmuramate--L-alanine ligase (460 aa).

Position 116-122 (116-122 (GSHGKTT)) interacts with ATP.

This sequence belongs to the MurCDEF family.

The protein localises to the cytoplasm. It catalyses the reaction UDP-N-acetyl-alpha-D-muramate + L-alanine + ATP = UDP-N-acetyl-alpha-D-muramoyl-L-alanine + ADP + phosphate + H(+). It participates in cell wall biogenesis; peptidoglycan biosynthesis. In terms of biological role, cell wall formation. This Caldanaerobacter subterraneus subsp. tengcongensis (strain DSM 15242 / JCM 11007 / NBRC 100824 / MB4) (Thermoanaerobacter tengcongensis) protein is UDP-N-acetylmuramate--L-alanine ligase.